The sequence spans 135 residues: Actin-related protein 2/3 complex subunit 5B (135 aa).

Belongs to the ARPC5 family. As to quaternary structure, component of the Arp2/3 complex composed of ARP2, ARP3, ARPC1/p41-ARC, ARPC2/p34-ARC, ARPC3/p21-ARC, ARPC4/p20-ARC and ARPC5/p16-ARC.

The protein localises to the cytoplasm. The protein resides in the cytoskeleton. It is found in the cell projection. Functions as a component of the Arp2/3 complex which is involved in regulation of actin polymerization and together with an activating nucleation-promoting factor (NPF) mediates the formation of branched actin networks. Arp2/3 complex plays a critical role in the control of cell morphogenesis via the modulation of cell polarity development. The protein is Actin-related protein 2/3 complex subunit 5B (ARPC5B) of Arabidopsis thaliana (Mouse-ear cress).